Consider the following 134-residue polypeptide: Large-conductance mechanosensitive channel (134 aa).

The next 2 membrane-spanning stretches (helical) occupy residues 16-36 (VIDLAVAVVIGAAFGKIVTAL) and 81-101 (GDFINTILQFIIIAFAIFIIV).

Belongs to the MscL family. As to quaternary structure, homopentamer.

The protein localises to the cell inner membrane. In terms of biological role, channel that opens in response to stretch forces in the membrane lipid bilayer. May participate in the regulation of osmotic pressure changes within the cell. The chain is Large-conductance mechanosensitive channel from Xylella fastidiosa (strain Temecula1 / ATCC 700964).